The following is a 109-amino-acid chain: Aquaporin-2 (109 aa).

Residues 1–6 (SIAFSR) are Cytoplasmic-facing. Residues 7–27 (AVFAEFLATLIFVFFGLGSAL) traverse the membrane as a helical segment. At 28–35 (NWQQSLPS) the chain is on the extracellular side. A helical membrane pass occupies residues 36-54 (VLQIAMAFGLAIGTLVQAL). Residues 55–59 (GHISG) are Cytoplasmic-facing. Residues 60–69 (AHINPAVTVA) constitute an intramembrane region (discontinuously helical). The NPA 1 signature appears at 63–65 (NPA). Topologically, residues 70–80 (CLVGCHVSFLR) are cytoplasmic. The chain crosses the membrane as a helical span at residues 81–102 (AAFYVAAQLLGAVAGAALLHEV). Residues 103–109 (TPSDVRG) lie on the Extracellular side of the membrane.

This sequence belongs to the MIP/aquaporin (TC 1.A.8) family. As to quaternary structure, homotetramer. Post-translationally, serine phosphorylation is necessary and sufficient for expression at the apical membrane. Endocytosis is not phosphorylation-dependent. In terms of processing, N-glycosylated.

The protein resides in the apical cell membrane. It localises to the basolateral cell membrane. It is found in the cell membrane. The protein localises to the cytoplasmic vesicle membrane. Its subcellular location is the golgi apparatus. The protein resides in the trans-Golgi network membrane. The catalysed reaction is H2O(in) = H2O(out). It catalyses the reaction glycerol(in) = glycerol(out). Its function is as follows. Forms a water-specific channel that provides the plasma membranes of renal collecting duct with high permeability to water, thereby permitting water to move in the direction of an osmotic gradient. Plays an essential role in renal water homeostasis. Could also be permeable to glycerol. The protein is Aquaporin-2 of Talpa europaea (European mole).